We begin with the raw amino-acid sequence, 290 residues long: Beta-lactamase OXY-2 (290 aa).

Positions 1-27 (MIKSSWRKIAMLAAAVPLLLASGALWA) are cleaved as a signal peptide. The active-site Acyl-ester intermediate is serine 72. A substrate-binding site is contributed by 236–238 (KTG).

Belongs to the class-A beta-lactamase family.

The catalysed reaction is a beta-lactam + H2O = a substituted beta-amino acid. Functionally, hydrolyzes broad-spectrum beta-lactam antibiotics. Active against all third-generation cephalosporins but ceftazidime. The chain is Beta-lactamase OXY-2 (bla) from Klebsiella oxytoca.